The sequence spans 334 residues: Protein-methionine-sulfoxide reductase catalytic subunit MsrP (334 aa).

The segment at residues 1 to 44 (MKKVSRLTEADVTAESAFFMQRRQVLKALGITTAALSLPTAAHA) is a signal peptide (tat-type signal). Residues Asn-88, 91-92 (YE), Cys-146, Thr-181, Asn-233, Arg-238, and 249-251 (GIK) contribute to the Mo-molybdopterin site.

It belongs to the MsrP family. As to quaternary structure, heterodimer of a catalytic subunit (MsrP) and a heme-binding subunit (MsrQ). It depends on Mo-molybdopterin as a cofactor. Predicted to be exported by the Tat system. The position of the signal peptide cleavage has not been experimentally proven.

Its subcellular location is the periplasm. The catalysed reaction is L-methionyl-[protein] + a quinone + H2O = L-methionyl-(S)-S-oxide-[protein] + a quinol. The enzyme catalyses L-methionyl-[protein] + a quinone + H2O = L-methionyl-(R)-S-oxide-[protein] + a quinol. Functionally, part of the MsrPQ system that repairs oxidized periplasmic proteins containing methionine sulfoxide residues (Met-O), using respiratory chain electrons. Thus protects these proteins from oxidative-stress damage caused by reactive species of oxygen and chlorine generated by the host defense mechanisms. MsrPQ is essential for the maintenance of envelope integrity under bleach stress, rescuing a wide series of structurally unrelated periplasmic proteins from methionine oxidation. The catalytic subunit MsrP is non-stereospecific, being able to reduce both (R-) and (S-) diastereoisomers of methionine sulfoxide. This Cronobacter sakazakii (strain ATCC BAA-894) (Enterobacter sakazakii) protein is Protein-methionine-sulfoxide reductase catalytic subunit MsrP.